The sequence spans 321 residues: Probable arabinan endo-1,5-alpha-L-arabinosidase A (321 aa).

The first 19 residues, 1–19 (MSASAFVAVASCLAALVHG), serve as a signal peptide directing secretion. Asp-34 serves as the catalytic Proton acceptor. Glu-200 serves as the catalytic Proton donor.

This sequence belongs to the glycosyl hydrolase 43 family.

It is found in the secreted. It catalyses the reaction Endohydrolysis of (1-&gt;5)-alpha-arabinofuranosidic linkages in (1-&gt;5)-arabinans.. It participates in glycan metabolism; L-arabinan degradation. Its function is as follows. Endo-1,5-alpha-L-arabinanase involved in degradation of pectin. Its preferred substrate is linear 1,5-alpha-L-arabinan. The chain is Probable arabinan endo-1,5-alpha-L-arabinosidase A (abnA) from Neosartorya fischeri (strain ATCC 1020 / DSM 3700 / CBS 544.65 / FGSC A1164 / JCM 1740 / NRRL 181 / WB 181) (Aspergillus fischerianus).